Here is an 831-residue protein sequence, read N- to C-terminus: Heat shock 70 kDa protein 15 (831 aa).

Disordered regions lie at residues 502–579 and 784–831; these read EEEV…KKKV and IMTK…EGST. The segment covering 512–526 has biased composition (basic and acidic residues); it reads DQSEETAKMDTDKAS. A phosphoserine mark is found at S533 and S536. The span at 787-800 shows a compositional bias: low complexity; the sequence is KPKPAAKAEAPQAK.

This sequence belongs to the heat shock protein 70 (TC 1.A.33) family. HSP110/SSE subfamily.

Its subcellular location is the cytoplasm. It is found in the nucleus. In terms of biological role, in cooperation with other chaperones, Hsp70s are key components that facilitate folding of de novo synthesized proteins, assist translocation of precursor proteins into organelles, and are responsible for degradation of damaged protein under stress conditions. This chain is Heat shock 70 kDa protein 15 (HSP70-15), found in Arabidopsis thaliana (Mouse-ear cress).